Consider the following 341-residue polypeptide: Tryptophan--tRNA ligase (341 aa).

Residues 11–13 (RPT) and 19–20 (GH) contribute to the ATP site. Residues 12–20 (PTGKLHIGH) carry the 'HIGH' region motif. Residue Asp140 participates in L-tryptophan binding. Residues 152–154 (GTD), Leu194, and 202–206 (KMSKS) each bind ATP. A 'KMSKS' region motif is present at residues 202-206 (KMSKS).

It belongs to the class-I aminoacyl-tRNA synthetase family. In terms of assembly, homodimer.

Its subcellular location is the cytoplasm. It carries out the reaction tRNA(Trp) + L-tryptophan + ATP = L-tryptophyl-tRNA(Trp) + AMP + diphosphate + H(+). Functionally, catalyzes the attachment of tryptophan to tRNA(Trp). The polypeptide is Tryptophan--tRNA ligase (Streptococcus agalactiae serotype III (strain NEM316)).